Reading from the N-terminus, the 101-residue chain is Salivary thrombin inhibitor anophelin (101 aa).

The N-terminal stretch at 1–21 is a signal peptide; the sequence is MASKVIVIALLCIALAAFVQG. The disordered stretch occupies residues 26-101; that stretch reads THGEEPEYDE…SDSSSGSTEN (76 aa). Residues 31 to 40 show a composition bias toward acidic residues; sequence PEYDEDDGAD. Residues 75–78 are blocks active site cleft of host thrombin in a reverse direction compared to substrates; it reads DPGR. Basic and acidic residues predominate over residues 75-87; it reads DPGRRPEFLKQHN. A compositionally biased stretch (polar residues) spans 88–101; it reads NENQSDSSSGSTEN. Asparagine 90 carries N-linked (GlcNAc...) asparagine glycosylation.

The protein belongs to the anophelin family. Interacts with human F2 (thrombin); the interaction results in thrombin inhibition.

It is found in the secreted. Its function is as follows. Salivary protein with anticoagulant activity that inhibits host thrombin (F2). The protein is Salivary thrombin inhibitor anophelin of Anopheles stephensi (Indo-Pakistan malaria mosquito).